The following is a 396-amino-acid chain: Elongation factor Tu (396 aa).

Positions 11–205 constitute a tr-type G domain; the sequence is KPHVNIGTIG…TIDEYIPTPV (195 aa). A G1 region spans residues 20 to 27; the sequence is GHVDHGKT. 20-27 serves as a coordination point for GTP; sequence GHVDHGKT. Position 27 (Thr-27) interacts with Mg(2+). The G2 stretch occupies residues 61–65; it reads GITIN. The segment at 82 to 85 is G3; sequence DAPG. GTP-binding positions include 82 to 86 and 137 to 140; these read DAPGH and NKTD. The interval 137–140 is G4; sequence NKTD. The G5 stretch occupies residues 175 to 177; it reads SAL.

The protein belongs to the TRAFAC class translation factor GTPase superfamily. Classic translation factor GTPase family. EF-Tu/EF-1A subfamily. As to quaternary structure, monomer.

The protein localises to the cytoplasm. It carries out the reaction GTP + H2O = GDP + phosphate + H(+). Its function is as follows. GTP hydrolase that promotes the GTP-dependent binding of aminoacyl-tRNA to the A-site of ribosomes during protein biosynthesis. This is Elongation factor Tu from Lacticaseibacillus casei (strain BL23) (Lactobacillus casei).